Here is a 503-residue protein sequence, read N- to C-terminus: Variant surface glycoprotein AnTaT 1.1 (503 aa).

Positions 1 to 29 (MVTKERNAALKIVMLVASALTLHPQQALA) are cleaved as a signal peptide. 2 disulfides stabilise this stretch: cysteine 45/cysteine 172 and cysteine 154/cysteine 209. Asparagine 113 is a glycosylation site (N-linked (GlcNAc...) asparagine). Residues asparagine 419 and asparagine 432 are each glycosylated (N-linked (GlcNAc...) asparagine). Aspartate 480 carries the GPI-anchor amidated aspartate lipid modification. Residues 481 to 503 (SSILLTKNFALSVVSAALVALLF) constitute a propeptide, removed in mature form.

The protein localises to the cell membrane. In terms of biological role, VSG forms a coat on the surface of the parasite. The trypanosome evades the immune response of the host by expressing a series of antigenically distinct VSGs from an estimated 1000 VSG genes. The sequence is that of Variant surface glycoprotein AnTaT 1.1 from Trypanosoma brucei brucei.